The following is a 477-amino-acid chain: Trigger factor (477 aa).

In terms of domain architecture, PPIase FKBP-type spans 163 to 248; sequence ENLVIFDYKA…ITEVKKSEEV (86 aa). Positions 408–461 are enriched in basic and acidic residues; the sequence is KAKPSKKEISKEEAEKILKEHQKQDHNHEHDHNHDHDHPEEKKASKSTKIEKKP. Positions 408–477 are disordered; that stretch reads KAKPSKKEIS…KPSTKKVSKK (70 aa).

Belongs to the FKBP-type PPIase family. Tig subfamily.

Its subcellular location is the cytoplasm. It carries out the reaction [protein]-peptidylproline (omega=180) = [protein]-peptidylproline (omega=0). Its function is as follows. Involved in protein export. Acts as a chaperone by maintaining the newly synthesized protein in an open conformation. Functions as a peptidyl-prolyl cis-trans isomerase. The sequence is that of Trigger factor from Pelagibacter ubique (strain HTCC1062).